A 2300-amino-acid polypeptide reads, in one-letter code: Protein Ycf2 (2300 aa).

1642 to 1649 (GSIGTGRS) serves as a coordination point for ATP.

This sequence belongs to the Ycf2 family.

It is found in the plastid. Its subcellular location is the chloroplast stroma. Probable ATPase of unknown function. Its presence in a non-photosynthetic plant (Epifagus virginiana) and experiments in tobacco indicate that it has an essential function which is probably not related to photosynthesis. This is Protein Ycf2 from Vitis vinifera (Grape).